The primary structure comprises 914 residues: Probable dipeptidyl-aminopeptidase B (914 aa).

Residues 1–82 (MGAEKRINDE…GLPPPSGAQR (82 aa)) form a disordered region. Over 1–88 (MGAEKRINDE…GAQRTPKKVS (88 aa)) the chain is Cytoplasmic. Low complexity predominate over residues 26 to 38 (DSTSTASISLALI). A helical; Signal-anchor for type II membrane protein transmembrane segment spans residues 89-109 (IIFWLVAALCVGGWLVAFFVF). Topologically, residues 110 to 914 (MGSPKKDSDK…RSLLKRMSNA (805 aa)) are vacuolar. N128, N295, N347, and N617 each carry an N-linked (GlcNAc...) asparagine glycan. S751 (charge relay system) is an active-site residue. N810 carries N-linked (GlcNAc...) asparagine glycosylation. Catalysis depends on charge relay system residues D828 and H861. N-linked (GlcNAc...) asparagine glycosylation is present at N897.

This sequence belongs to the peptidase S9B family.

Its subcellular location is the vacuole membrane. The enzyme catalyses Release of an N-terminal dipeptide, Xaa-Yaa-|-Zaa-, from a polypeptide, preferentially when Yaa is Pro, provided Zaa is neither Pro nor hydroxyproline.. Its function is as follows. Type IV dipeptidyl-peptidase which removes N-terminal dipeptides sequentially from polypeptides having unsubstituted N-termini provided that the penultimate residue is proline. This Uncinocarpus reesii (strain UAMH 1704) protein is Probable dipeptidyl-aminopeptidase B (DAPB).